Consider the following 377-residue polypeptide: 1,3,6,8-tetrahydroxynaphthalene synthase (377 aa).

Residue Cys-164 is part of the active site.

This sequence belongs to the thiolase-like superfamily. Chalcone/stilbene synthases family. In terms of assembly, homodimer.

It catalyses the reaction 5 malonyl-CoA + 5 H(+) = naphthalene-1,3,6,8-tetrol + 5 CO2 + 5 CoA + H2O. It functions in the pathway pigment biosynthesis; melanin biosynthesis. Functionally, involved in the biosynthesis of melanin but also various secondary metabolites containing a naphthoquinone ring. Catalyzes the iterative condensation of five CoA-linked malonyl units to form a pentaketide intermediate. THNS subsequently catalyzes the dual intramolecular Claisen and aldol condensations of this linear intermediate to produce the fused ring of 1,3,6,8-tetrahydroxynaphthalene (THN). This is 1,3,6,8-tetrahydroxynaphthalene synthase from Streptomyces peucetius subsp. caesius.